A 157-amino-acid chain; its full sequence is Nicotinate dehydrogenase subunit A (157 aa).

A 2Fe-2S ferredoxin-type domain is found at 3–79 (TTISLQVNGQ…GRNITTLEGL (77 aa)). [2Fe-2S] cluster-binding residues include cysteine 41, cysteine 46, cysteine 49, and cysteine 61.

[2Fe-2S] cluster serves as cofactor.

It catalyses the reaction 2 Fe(III)-[cytochrome] + nicotinate + H2O = 2 Fe(II)-[cytochrome] + 6-hydroxynicotinate + 2 H(+). It functions in the pathway cofactor degradation; nicotinate degradation. Functionally, subunit of the two-component enzyme NicAB that mediates nicotinate hydroxylation, the first step in the aerobic nicotinate degradation pathway. Mediates conversion of nicotinate into 6-hydroxynicotinate (6HNA). This is Nicotinate dehydrogenase subunit A (nicA) from Pseudomonas putida (strain ATCC 47054 / DSM 6125 / CFBP 8728 / NCIMB 11950 / KT2440).